The following is a 294-amino-acid chain: MHSRFQAALTTLAADLQAAIAPMLADPHFPALLEADQVATLQQATGLDEDALAFALLPLAAACARADLSHFNVGAIARGVSGRWYFGGNMEFLGATMQQTVHAEQSAISHAWLRGETSLRAITVNYTPCGHCRQFMNELNSGLALRIHLPGREAHALEHYLPDAFGPKDLEIKTLLMDAQDHGFPVSGDALTQAAIQAANRCHAPYSHSPSGVALELKDGTIFSGSYAENAAFNPTLPPLQGALNLLSLNGYDYPAIQRAILAEKADAALIQWDATVATLKALGCQNIERVLLG.

2 consecutive CMP/dCMP-type deaminase domains span residues 48-168 (DEDA…FGPK) and 186-294 (VSGD…VLLG). 89-91 (NME) provides a ligand contact to substrate. His-102 is a Zn(2+) binding site. Catalysis depends on Glu-104, which acts as the Proton donor. Zn(2+) contacts are provided by Cys-129 and Cys-132.

The protein belongs to the cytidine and deoxycytidylate deaminase family. As to quaternary structure, homodimer. The cofactor is Zn(2+).

It carries out the reaction cytidine + H2O + H(+) = uridine + NH4(+). It catalyses the reaction 2'-deoxycytidine + H2O + H(+) = 2'-deoxyuridine + NH4(+). This enzyme scavenges exogenous and endogenous cytidine and 2'-deoxycytidine for UMP synthesis. This chain is Cytidine deaminase, found in Klebsiella pneumoniae (strain 342).